The primary structure comprises 510 residues: Rab proteins geranylgeranyltransferase component A 1 (510 aa).

This sequence belongs to the Rab GDI family. May interact with rab-5, rab-7 and rab-11. Does not interact with rab-3, rab-27 and rab-10. In terms of tissue distribution, expressed in several neurons including head neurons, motor neurons located in the ventral nerve cord, HSN and CAN neurons, and tail neurons, and in muscles such as body-wall, pharyngeal, intestinal and anal sphincter. Also expressed in seam cells, the hypodermis and the intestine.

Its subcellular location is the cytoplasm. Substrate-binding subunit of the Rab geranylgeranyltransferase (GGTase) complex. Binds unprenylated Rab proteins and presents the substrate peptide to the catalytic component B and remains bound to it after the geranylgeranyl transfer reaction. The component A is thought to be regenerated by transferring its prenylated Rab back to the donor membrane. Plays a role in neurotransmitter release from presynaptic terminals at neuromuscular junctions. Positively regulates the function of rab-27 in synaptic transmission most likely through mediating rab-27 prenylation. The protein is Rab proteins geranylgeranyltransferase component A 1 of Caenorhabditis elegans.